Here is a 36-residue protein sequence, read N- to C-terminus: Neurotoxin PRTx26An0C3 (36 aa).

Intrachain disulfides connect Cys3–Cys17, Cys10–Cys22, and Cys16–Cys34.

In terms of tissue distribution, expressed by the venom gland.

It is found in the secreted. In terms of biological role, neurotoxin. Causes spastic paralysis and death in mice. Moderate inhibitor of L-type calcium channels (Cav1/CACNA1). This chain is Neurotoxin PRTx26An0C3, found in Phoneutria nigriventer (Brazilian armed spider).